A 698-amino-acid polypeptide reads, in one-letter code: eEF1A lysine and N-terminal methyltransferase (698 aa).

Position 1 is an N-acetylmethionine (Met-1). A Phosphoserine modification is found at Ser-267. The segment at 431–461 (KDTSHRAQKKRKKDRKKQRPADTSEDFPPAP) is disordered. A compositionally biased stretch (basic residues) spans 436 to 448 (RAQKKRKKDRKKQ).

This sequence belongs to the methyltransferase superfamily. In terms of assembly, forms a tripartite complex containing GAB1, METTL13 and SPRY2. Within the complex interacts with GAB1 and SPRY2. As to expression, expressed in the inner ear (at protein level). Expression is detected in the cochlear duct, spiral limbus region, efferent and afferent nerves, and in spiral ganglion neurons (at protein level).

The protein localises to the cytoplasm. It is found in the nucleus. Its subcellular location is the mitochondrion. It carries out the reaction L-lysyl-[protein] + S-adenosyl-L-methionine = N(6)-methyl-L-lysyl-[protein] + S-adenosyl-L-homocysteine + H(+). It catalyses the reaction N(6)-methyl-L-lysyl-[protein] + S-adenosyl-L-methionine = N(6),N(6)-dimethyl-L-lysyl-[protein] + S-adenosyl-L-homocysteine + H(+). The catalysed reaction is N-terminal glycyl-L-lysyl-L-glutamyl-[protein] + 3 S-adenosyl-L-methionine = N-terminal N,N,N-trimethyl-glycyl-L-lysyl-L-glutamyl-[protein] + 3 S-adenosyl-L-homocysteine + 3 H(+). Dual methyltransferase that catalyzes methylation of elongation factor 1-alpha (EEF1A1 and EEF1A2) at two different positions, and is therefore involved in the regulation of mRNA translation. Via its C-terminus, methylates EEF1A1 and EEF1A2 at the N-terminal residue 'Gly-2'. Via its N-terminus dimethylates EEF1A1 and EEF1A2 at residue 'Lys-55'. Has no activity towards core histones H2A, H2B, H3 and H4. In Mus musculus (Mouse), this protein is eEF1A lysine and N-terminal methyltransferase.